Consider the following 422-residue polypeptide: Mitochondrial distribution and morphology protein 12 (422 aa).

Residues 1–386 enclose the SMP-LTD domain; that stretch reads MSFDINWNQL…WPSWICIDMN (386 aa). Disordered regions lie at residues 74-134 and 387-422; these read GATN…HDLG and DDGD…THEV. Acidic residues-rich tracts occupy residues 109–130 and 387–401; these read FDDD…EYDD and DDGD…EDSN. Residues 405-422 are compositionally biased toward basic and acidic residues; it reads GDGKDNDGKHGDGPTHEV.

It belongs to the MDM12 family. In terms of assembly, component of the ER-mitochondria encounter structure (ERMES) or MDM complex, composed of MMM1, MDM10, MDM12 and MDM34. An MMM1 homodimer associates with one molecule of MDM12 on each side in a pairwise head-to-tail manner, and the SMP-LTD domains of MMM1 and MDM12 generate a continuous hydrophobic tunnel for phospholipid trafficking.

The protein localises to the mitochondrion outer membrane. Its subcellular location is the endoplasmic reticulum membrane. Functionally, component of the ERMES/MDM complex, which serves as a molecular tether to connect the endoplasmic reticulum (ER) and mitochondria. Components of this complex are involved in the control of mitochondrial shape and protein biogenesis, and function in nonvesicular lipid trafficking between the ER and mitochondria. MDM12 is required for the interaction of the ER-resident membrane protein MMM1 and the outer mitochondrial membrane-resident beta-barrel protein MDM10. The MDM12-MMM1 subcomplex functions in the major beta-barrel assembly pathway that is responsible for biogenesis of all mitochondrial outer membrane beta-barrel proteins, and acts in a late step after the SAM complex. The MDM10-MDM12-MMM1 subcomplex further acts in the TOM40-specific pathway after the action of the MDM12-MMM1 complex. Essential for establishing and maintaining the structure of mitochondria and maintenance of mtDNA nucleoids. The protein is Mitochondrial distribution and morphology protein 12 of Candida dubliniensis (strain CD36 / ATCC MYA-646 / CBS 7987 / NCPF 3949 / NRRL Y-17841) (Yeast).